Here is a 101-residue protein sequence, read N- to C-terminus: Putative pterin-4-alpha-carbinolamine dehydratase (101 aa).

It belongs to the pterin-4-alpha-carbinolamine dehydratase family.

The enzyme catalyses (4aS,6R)-4a-hydroxy-L-erythro-5,6,7,8-tetrahydrobiopterin = (6R)-L-erythro-6,7-dihydrobiopterin + H2O. The polypeptide is Putative pterin-4-alpha-carbinolamine dehydratase (dcoH) (Streptomyces avermitilis (strain ATCC 31267 / DSM 46492 / JCM 5070 / NBRC 14893 / NCIMB 12804 / NRRL 8165 / MA-4680)).